Here is a 296-residue protein sequence, read N- to C-terminus: D-alanine--D-alanine ligase (296 aa).

One can recognise an ATP-grasp domain in the interval 103-293 (KEILMHHRMP…FDSFVKRIIE (191 aa)). 129-180 (ISFPVAVKPSSGGSSIATFKVKSIQELKHAYEEASKYGEVMIEQWVTGKEIT) serves as a coordination point for ATP. Mg(2+) is bound by residues aspartate 247, glutamate 260, and asparagine 262.

It belongs to the D-alanine--D-alanine ligase family. It depends on Mg(2+) as a cofactor. Mn(2+) is required as a cofactor.

It is found in the cytoplasm. The catalysed reaction is 2 D-alanine + ATP = D-alanyl-D-alanine + ADP + phosphate + H(+). The protein operates within cell wall biogenesis; peptidoglycan biosynthesis. In terms of biological role, cell wall formation. The polypeptide is D-alanine--D-alanine ligase (Francisella tularensis subsp. tularensis (strain FSC 198)).